Consider the following 517-residue polypeptide: Ribonuclease Y (517 aa).

A helical membrane pass occupies residues 1-21; that stretch reads MIEFLIGLIAAVVGILVGYLI. The KH domain occupies 207–271; sequence LINVVNIKND…IAVRTVELLV (65 aa). An HD domain is found at 333 to 426; sequence ALIHSLEVAH…VCTADVLSAA (94 aa).

This sequence belongs to the RNase Y family.

It localises to the cell membrane. Functionally, endoribonuclease that initiates mRNA decay. This chain is Ribonuclease Y, found in Campylobacter hominis (strain ATCC BAA-381 / DSM 21671 / CCUG 45161 / LMG 19568 / NCTC 13146 / CH001A).